The sequence spans 124 residues: Small ribosomal subunit protein eS25 (124 aa).

Basic and acidic residues predominate over residues 1–22 (MPPKDSKQKKDTSKAKKDKDPV). The disordered stretch occupies residues 1–37 (MPPKDSKQKKDTSKAKKDKDPVNKSGGKAKKKKWSKG). Residues 27–37 (GKAKKKKWSKG) are compositionally biased toward basic residues.

This sequence belongs to the eukaryotic ribosomal protein eS25 family. In terms of assembly, component of the small ribosomal subunit.

It localises to the cytoplasm. Functionally, component of the small ribosomal subunit. The ribosome is a large ribonucleoprotein complex responsible for the synthesis of proteins in the cell. The protein is Small ribosomal subunit protein eS25 (rps25) of Ictalurus punctatus (Channel catfish).